Here is an 820-residue protein sequence, read N- to C-terminus: Leucine--tRNA ligase (820 aa).

The 'HIGH' region signature appears at 40 to 51; the sequence is PYPSGAGLHVGH. The 'KMSKS' region motif lies at 601–605; it reads KMSKS. Lys-604 lines the ATP pocket.

It belongs to the class-I aminoacyl-tRNA synthetase family.

Its subcellular location is the cytoplasm. It catalyses the reaction tRNA(Leu) + L-leucine + ATP = L-leucyl-tRNA(Leu) + AMP + diphosphate. The sequence is that of Leucine--tRNA ligase from Chlamydia pneumoniae (Chlamydophila pneumoniae).